The sequence spans 76 residues: High-potential iron-sulfur protein isozyme 2 (76 aa).

[4Fe-4S] cluster contacts are provided by Cys-38, Cys-41, Cys-54, and Cys-70.

It belongs to the high-potential iron-sulfur protein (HiPIP) family. Homodimer.

In terms of biological role, specific class of high-redox-potential 4Fe-4S ferredoxins. Functions in anaerobic electron transport in most purple and in some other photosynthetic bacteria and in at least one genus (Paracoccus) of halophilic, denitrifying bacteria. This chain is High-potential iron-sulfur protein isozyme 2 (hip2), found in Halorhodospira halophila (Ectothiorhodospira halophila).